Consider the following 542-residue polypeptide: Probable E3 ubiquitin-protein ligase ARI11 (542 aa).

The tract at residues 1-25 (MSSSDRDIIDIESGEEDLYSDGGND) is disordered. Acidic residues predominate over residues 10–19 (DIESGEEDLY). The TRIAD supradomain stretch occupies residues 135-342 (VDIQCGICFE…SDHKACNAFK (208 aa)). The Zn(2+) site is built by C139, C142, C156, H158, C161, C164, C184, C189, C228, C233, C251, C253, C258, C261, H266, C271, C298, and C301. An RING-type 1 zinc finger spans residues 139–189 (CGICFESYTRKEIARVSCGHPYCKTCWTGYITTKIEDGPGCLRVKCPEPSC). The IBR-type zinc finger occupies 208 to 271 (DKYYRYFLRS…CEDAHSPVDC (64 aa)). The RING-type 2; atypical zinc finger occupies 298-328 (CPKCKRPIEKNTGCNHMSCSAPCRHYFCWAC). Residue C311 is part of the active site. 6 residues coordinate Zn(2+): C316, C320, C325, C328, H335, and C338.

The protein belongs to the RBR family. Ariadne subfamily. Zn(2+) is required as a cofactor.

It catalyses the reaction [E2 ubiquitin-conjugating enzyme]-S-ubiquitinyl-L-cysteine + [acceptor protein]-L-lysine = [E2 ubiquitin-conjugating enzyme]-L-cysteine + [acceptor protein]-N(6)-ubiquitinyl-L-lysine.. It functions in the pathway protein modification; protein ubiquitination. In terms of biological role, might act as an E3 ubiquitin-protein ligase, or as part of E3 complex, which accepts ubiquitin from specific E2 ubiquitin-conjugating enzymes and then transfers it to substrates. In Arabidopsis thaliana (Mouse-ear cress), this protein is Probable E3 ubiquitin-protein ligase ARI11 (ARI11).